Here is a 110-residue protein sequence, read N- to C-terminus: Large ribosomal subunit protein P2 (110 aa).

The interval 63–110 (ASVPSGGGVAAAAPAAGGGGADPAEAKEEKKEEPEEESDDDMGFGLFD) is disordered. Positions 86–95 (AEAKEEKKEE) are enriched in basic and acidic residues.

The protein belongs to the eukaryotic ribosomal protein P1/P2 family. In terms of assembly, P1 and P2 exist as dimers at the large ribosomal subunit. In terms of processing, phosphorylated.

Functionally, plays an important role in the elongation step of protein synthesis. In Cryptochiton stelleri (Giant gumboot chiton), this protein is Large ribosomal subunit protein P2.